Consider the following 354-residue polypeptide: Interferon-inducible protein AIM2 (354 aa).

In terms of domain architecture, Pyrin spans 1–87 (MESEYREMLL…ANALEEKKKE (87 aa)). Residues 95-124 (NTKKRGTQKVENRSQAENCSAASATRSDND) form a disordered region. Residues 109-120 (QAENCSAASATR) are compositionally biased toward polar residues. Residues 144-341 (MVAEQEAIRE…SGPCSFFKVI (198 aa)) form the HIN-200 domain.

This sequence belongs to the HIN-200 family. Self-associates; forms homooligomers in response to cytosolic double-stranded DNA (dsDNA) and the dsDNA seems to serve as oligomerization platform. Component of AIM2 inflammasome, which consists of a signal sensor component (AIM2), an adapter (PYCARD/ASC), which recruits an effector pro-inflammatory caspase (CASP1). Interacts (via pyrin domain) with PYCARD/ASC (via pyrin domain); interaction is direct. Component of the AIM2 PANoptosome complex, a multiprotein complex that drives inflammatory cell death (PANoptosis). Interacts with EIF2AK2/PKR. Interacts with MAPRE1. Interacts (via HIN-200 domain) with IFI202 (via HIN-200 domain 2); preventing activation of the AIM2 inflammasome. Interacts with RACK1; promoting association with PP2A phosphatase and dephosphorylation of AKT1. Interacts with TRIM11; promoting AIM2 recruitment to autophagosomes and autophagy-dependent degradation. In terms of processing, degraded via selective autophagy following interaction with TRIM11. In terms of tissue distribution, expressed in developing neurons. Highly expressed in regulatory T-cells (Treg).

It is found in the cytoplasm. It localises to the inflammasome. The protein localises to the nucleus. Its activity is regulated as follows. Inactive in absence of double-stranded DNA (dsDNA). Homooligomerizes upon binding to dsDNA, dsDNA serving as an oligomerization platform. AIM2 requires large dsDNA to generate a structural template that couples dsDNA ligand-binding and homooligomerization. Homooligomerization is followed by recruitment of PYCARD/ASC to initiate speck formation (nucleation). AIM2 and PYCARD/ASC homooligomer filaments assemble bidirectionally and the recognition between AIM2 and PYCARD/ASC oligomers occurs in a head-to-tail manner. Clustered PYCARD/ASC nucleates the formation of CASP1 filaments through the interaction of their respective CARD domains, acting as a platform for CASP1 polymerization and activation. Active CASP1 then specifically processes protein precursors, such as gasdermin-D (GSDMD), IL1B and IL18, leading to the release of mature cytokines in the extracellular milieu or pyroptosis, depending on cell type. AIM2 can be activated in response to events that cause genomic DNA (HIV protease inhibitor nelfinavir) or mitochondrial DNA release in the cytoplasm (such as Perfluoroalkyl substance pollutants or cholesterol overload). Activation of the AIM2 inflammasome is inhibited by IFI202. Activation of the AIM2 inflammasome is inhibited by TRIM11, which promotes autophagy-dependent degradation of AIM2. Functionally, sensor component of the AIM2 inflammasome, which mediates inflammasome activation in response to the presence of double-stranded DNA (dsDNA) in the cytosol, leading to subsequent pyroptosis. Inflammasomes are supramolecular complexes that assemble in the cytosol in response to pathogens and other damage-associated signals and play critical roles in innate immunity and inflammation. Acts as a recognition receptor (PRR): specifically recognizes and binds dsDNA in the cytosol, and mediates the formation of the inflammasome polymeric complex composed of AIM2, CASP1 and PYCARD/ASC. Recruitment of pro-caspase-1 (proCASP1) to the AIM2 inflammasome promotes caspase-1 (CASP1) activation, which subsequently cleaves and activates inflammatory cytokines IL1B and IL18 and gasdermin-D (GSDMD), promoting cytokine secretion. In some cells, CASP1 activation mediates cleavage and activation of GSDMD, triggering pyroptosis without promoting cytokine secretion. Detects cytosolic dsDNA of viral and bacterial origin in a non-sequence-specific manner. Involved in the DNA damage response caused by acute ionizing radiation by mediating pyroptosis of intestinal epithelial cells and bone marrow cells in response to double-strand DNA breaks. Mechanistically, AIM2 senses DNA damage in the nucleus to mediate inflammasome assembly and inflammatory cell death. Also acts as a regulator of neurodevelopment via its role in the DNA damage response: acts by promoting neural cell death in response to DNA damage in the developing brain, thereby purging genetically compromised cells of the central nervous system. Pyroptosis mediated by the AIM2 inflammasome in response to DNA damage is dependent on GSDMD without involving IL1B and IL18 cytokine secretion. Also acts as a mediator of pyroptosis, necroptosis and apoptosis (PANoptosis), an integral part of host defense against pathogens, in response to bacterial infection. Can also trigger PYCARD/ASC-dependent, caspase-1-independent cell death that involves caspase-8 (CASP8). In terms of biological role, also acts as a tumor suppressor independently of its role in inflammatory response. Able to suppress overt cell proliferation in enterocytes: restricts stem cell proliferation in the intestinal mucosa in an inflammasome-independent manner, contributing to a decrease in the likelihood of colorectal cancer development. AIM2 suppresses cell proliferation by inhibiting phosphorylation of AKT1 at 'Ser-473', preventing AKT1 activation and AKT-mTOR signaling pathway. Inhibits AKT1 phosphorylation both by inhibiting the activity of PRKDC/DNA-PK kinase and promoting dephosphorylation by PP2A phosphatase. Also acts as a key regulator of regulatory T-cells (Treg) homeostasis by promoting their stability: acts by preventing AKT1 activation. Its role in Treg homeostasis is important to restain autoimmune diseases. The sequence is that of Interferon-inducible protein AIM2 from Mus musculus (Mouse).